Reading from the N-terminus, the 268-residue chain is L-aspartate dehydrogenase (268 aa).

NAD(+) contacts are provided by Ala-125 and Asn-191. Residue His-221 is part of the active site.

It belongs to the L-aspartate dehydrogenase family.

The catalysed reaction is L-aspartate + NADP(+) + H2O = oxaloacetate + NH4(+) + NADPH + H(+). The enzyme catalyses L-aspartate + NAD(+) + H2O = oxaloacetate + NH4(+) + NADH + H(+). The protein operates within cofactor biosynthesis; NAD(+) biosynthesis; iminoaspartate from L-aspartate (dehydrogenase route): step 1/1. Functionally, specifically catalyzes the NAD or NADP-dependent dehydrogenation of L-aspartate to iminoaspartate. This chain is L-aspartate dehydrogenase, found in Ralstonia nicotianae (strain ATCC BAA-1114 / GMI1000) (Ralstonia solanacearum).